We begin with the raw amino-acid sequence, 181 residues long: Putative D-tyrosyl-tRNA(Tyr) deacylase 2 (181 aa).

Belongs to the DTD family. Highly divergent. In terms of assembly, homodimer.

The protein resides in the cytoplasm. In terms of biological role, may hydrolyze D-tyrosyl-tRNA(Tyr) into D-tyrosine and free tRNA(Tyr). Could be a defense mechanism against a harmful effect of D-tyrosine. This chain is Putative D-tyrosyl-tRNA(Tyr) deacylase 2, found in Leishmania major.